The following is a 218-amino-acid chain: Adenylate kinase (218 aa).

11-16 (GAGKGT) contributes to the ATP binding site. The segment at 31–60 (STGDMFREAMANKTKVGLEAKSYIDKGNLV) is NMP. AMP is bound by residues Thr-32, Arg-37, 58-60 (NLV), 86-89 (GFPR), and Gln-93. Residues 127 to 165 (ARYMCKNCGATYNKLSKQPKVEGTCDRCGSHEFYQREDD) form an LID region. Position 128 (Arg-128) interacts with ATP. Cys-131 and Cys-134 together coordinate Zn(2+). 137 to 138 (TY) is an ATP binding site. The Zn(2+) site is built by Cys-151 and Cys-154. 2 residues coordinate AMP: Arg-162 and Arg-173. Gln-201 provides a ligand contact to ATP.

It belongs to the adenylate kinase family. Monomer.

Its subcellular location is the cytoplasm. The enzyme catalyses AMP + ATP = 2 ADP. The protein operates within purine metabolism; AMP biosynthesis via salvage pathway; AMP from ADP: step 1/1. Its function is as follows. Catalyzes the reversible transfer of the terminal phosphate group between ATP and AMP. Plays an important role in cellular energy homeostasis and in adenine nucleotide metabolism. The polypeptide is Adenylate kinase (Lactobacillus helveticus (strain DPC 4571)).